The chain runs to 402 residues: Phosphoglycerate kinase (402 aa).

Residues 24-26, R40, 63-66, R122, and R155 contribute to the substrate site; these read DFN and HFGR. Residues K206, G297, E328, and 358–361 contribute to the ATP site; that span reads GGDS.

Belongs to the phosphoglycerate kinase family. In terms of assembly, monomer.

It localises to the cytoplasm. It catalyses the reaction (2R)-3-phosphoglycerate + ATP = (2R)-3-phospho-glyceroyl phosphate + ADP. It participates in carbohydrate degradation; glycolysis; pyruvate from D-glyceraldehyde 3-phosphate: step 2/5. The chain is Phosphoglycerate kinase from Prochlorococcus marinus (strain MIT 9301).